A 152-amino-acid polypeptide reads, in one-letter code: 6,7-dimethyl-8-ribityllumazine synthase (152 aa).

5-amino-6-(D-ribitylamino)uracil-binding positions include Phe24, 56–58 (SFE), and 80–82 (VVV). Position 85–86 (85–86 (ET)) interacts with (2S)-2-hydroxy-3-oxobutyl phosphate. The active-site Proton donor is His88. Position 113 (Phe113) interacts with 5-amino-6-(D-ribitylamino)uracil. Residue Arg127 coordinates (2S)-2-hydroxy-3-oxobutyl phosphate.

This sequence belongs to the DMRL synthase family.

It carries out the reaction (2S)-2-hydroxy-3-oxobutyl phosphate + 5-amino-6-(D-ribitylamino)uracil = 6,7-dimethyl-8-(1-D-ribityl)lumazine + phosphate + 2 H2O + H(+). Its pathway is cofactor biosynthesis; riboflavin biosynthesis; riboflavin from 2-hydroxy-3-oxobutyl phosphate and 5-amino-6-(D-ribitylamino)uracil: step 1/2. Its function is as follows. Catalyzes the formation of 6,7-dimethyl-8-ribityllumazine by condensation of 5-amino-6-(D-ribitylamino)uracil with 3,4-dihydroxy-2-butanone 4-phosphate. This is the penultimate step in the biosynthesis of riboflavin. The protein is 6,7-dimethyl-8-ribityllumazine synthase of Thermococcus onnurineus (strain NA1).